Reading from the N-terminus, the 779-residue chain is Potassium/sodium hyperpolarization-activated cyclic nucleotide-gated channel 3 (779 aa).

The tract at residues 1–47 (MEEEARPAAGAGEAATPARETPPAAPAQARAASGGVPESAPEPKRRQ) is disordered. The Cytoplasmic portion of the chain corresponds to 1-96 (MEEEARPAAG…PYSDFRFYWD (96 aa)). Low complexity predominate over residues 7-32 (PAAGAGEAATPARETPPAAPAQARAA). Residues 45-90 (RRQLGTLLQPTVNKFSLRVFGSHKAVEIEQERVKSAGAWIIHPYSD) are involved in subunit assembly. A helical membrane pass occupies residues 97–117 (LIMLLLMVGNLIVLPVGITFF). Residues 118–123 (KEENSP) are Extracellular-facing. Residues 124 to 144 (PWIVFNVLSDTFFLLDLVLNF) form a helical membrane-spanning segment. The Cytoplasmic portion of the chain corresponds to 145 to 170 (RTGIVVEEGAEILLAPRAIRTRYLRT). The helical transmembrane segment at 171 to 191 (WFLVDLISSIPVDYIFLVVEL) threads the bilayer. At 192 to 200 (EPRLDAEVY) the chain is on the extracellular side. The helical; Voltage-sensor transmembrane segment at 201-221 (KTARALRIVRFTKILSLLRLL) threads the bilayer. Residues 222-252 (RLSRLIRYIHQWEEIFHMTYDLASAVVRIFN) lie on the Cytoplasmic side of the membrane. A helical transmembrane segment spans residues 253 to 273 (LIGMMLLLCHWDGCLQFLVPM). Residues 274-296 (LQDFPSDCWVSMNRMVNHSWGRQ) are Extracellular-facing. An N-linked (GlcNAc...) asparagine glycan is attached at Asn-290. Residues 297–318 (YSHALFKAMSHMLCIGYGQQAP) constitute an intramembrane region (pore-forming). Residues 319–328 (VGMPDVWLTM) lie on the Extracellular side of the membrane. The chain crosses the membrane as a helical span at residues 329 to 349 (LSMIVGATCYAMFIGHATALI). Residues 350–779 (QSLDSSRRQY…PRGPQISANM (430 aa)) are Cytoplasmic-facing. Positions 353–779 (DSSRRQYQEK…PRGPQISANM (427 aa)) are interaction with KCTD3. 3',5'-cyclic AMP-binding residues include Gly-491, Glu-492, Cys-494, Arg-501, Thr-502, Arg-542, and Arg-545. The tract at residues 549-569 (KNSILQRKRSEPSPGSSGGVM) is disordered. Position 633 is a phosphoserine (Ser-633). The segment covering 687 to 697 (SLSRTGRSQVS) has biased composition (polar residues). A disordered region spans residues 687–779 (SLSRTGRSQV…PRGPQISANM (93 aa)).

It belongs to the potassium channel HCN family. Homotetramer. The potassium channel is composed of a homo- or heterotetrameric complex of pore-forming subunits. Interacts with HCN1. Interacts with KCTD3; this interaction increases cell surface expression and current density of this channel. Interacts with PEX5L. Detected in hypothalamus, amygdala, olfactory bulb, hippocampus and retina (at protein level). Highly expressed in brain and heart, in particular in ventricle, atrium and in sinoatrial node (SAN). Detected at low levels in skeletal muscle and lung. Expressed in DRG neurons.

The protein resides in the cell membrane. The catalysed reaction is K(+)(in) = K(+)(out). It catalyses the reaction Na(+)(in) = Na(+)(out). With respect to regulation, unlike HCN2 and HCN4, HCN3 is insensitive to cyclic nucleotides, such as cAMP or cGMP. This lack of sensitivity of HCN3, despite harboring a functional cyclic nucleotide-binding domain (CNBD), may be explained by its shorter C-terminal sequence, which may alter the normal autoinhibition of the channel. Inhibited by Cs(1+) and ivabradine. Phosphatidylinositol-4,5-bisphosphate (PIP(2)) shifts HCN3 activation to more depolarized potentials and accelerated activation kinetics. In terms of biological role, hyperpolarization-activated ion channel that are permeable to sodium and potassium ions, with an about 3:1 preference for potassium ions. Contributes to the native pacemaker currents in heart (If) and in neurons (Ih). In particular, plays a pivotal role in maintaining excitability and promoting rhythmic burst firing within hypothalamic nuclei. Exerts a significant influence on the configuration of the cardiac action potential waveform. Does not appear to play a prominent role in the processing of acute, neuropathic, or inflammatory pain. The protein is Potassium/sodium hyperpolarization-activated cyclic nucleotide-gated channel 3 (Hcn3) of Mus musculus (Mouse).